Here is a 223-residue protein sequence, read N- to C-terminus: Imidazoleglycerol-phosphate dehydratase (223 aa).

It belongs to the imidazoleglycerol-phosphate dehydratase family.

It carries out the reaction D-erythro-1-(imidazol-4-yl)glycerol 3-phosphate = 3-(imidazol-4-yl)-2-oxopropyl phosphate + H2O. It functions in the pathway amino-acid biosynthesis; L-histidine biosynthesis; L-histidine from 5-phospho-alpha-D-ribose 1-diphosphate: step 6/9. This Zygosaccharomyces bailii protein is Imidazoleglycerol-phosphate dehydratase (HIS3).